We begin with the raw amino-acid sequence, 268 residues long: NH(3)-dependent NAD(+) synthetase (268 aa).

46–53 is a binding site for ATP; sequence GVSGGQDS. D52 serves as a coordination point for Mg(2+). Deamido-NAD(+) is bound at residue R140. T160 contributes to the ATP binding site. E165 is a Mg(2+) binding site. Positions 173 and 180 each coordinate deamido-NAD(+). Residue K189 coordinates ATP. Deamido-NAD(+) is bound at residue 260-261; that stretch reads HK.

It belongs to the NAD synthetase family. Homodimer.

The enzyme catalyses deamido-NAD(+) + NH4(+) + ATP = AMP + diphosphate + NAD(+) + H(+). It participates in cofactor biosynthesis; NAD(+) biosynthesis; NAD(+) from deamido-NAD(+) (ammonia route): step 1/1. Its function is as follows. Catalyzes the ATP-dependent amidation of deamido-NAD to form NAD. Uses ammonia as a nitrogen source. In Buchnera aphidicola subsp. Acyrthosiphon pisum (strain Tuc7), this protein is NH(3)-dependent NAD(+) synthetase.